A 523-amino-acid polypeptide reads, in one-letter code: 2-isopropylmalate synthase (523 aa).

Positions 5–267 constitute a Pyruvate carboxyltransferase domain; sequence VIIFDTTLRD…ETGINAKEIH (263 aa). Residues Asp14, His202, His204, and Asn238 each coordinate Mn(2+). The tract at residues 392 to 523 is regulatory domain; the sequence is ELQQLVVHSD…QQNKQEFGSV (132 aa).

This sequence belongs to the alpha-IPM synthase/homocitrate synthase family. LeuA type 1 subfamily. Homodimer. Mn(2+) is required as a cofactor.

The protein localises to the cytoplasm. It catalyses the reaction 3-methyl-2-oxobutanoate + acetyl-CoA + H2O = (2S)-2-isopropylmalate + CoA + H(+). The protein operates within amino-acid biosynthesis; L-leucine biosynthesis; L-leucine from 3-methyl-2-oxobutanoate: step 1/4. Catalyzes the condensation of the acetyl group of acetyl-CoA with 3-methyl-2-oxobutanoate (2-ketoisovalerate) to form 3-carboxy-3-hydroxy-4-methylpentanoate (2-isopropylmalate). The sequence is that of 2-isopropylmalate synthase from Shewanella halifaxensis (strain HAW-EB4).